Reading from the N-terminus, the 444-residue chain is Methylenetetrahydrofolate--tRNA-(uracil-5-)-methyltransferase TrmFO (444 aa).

9 to 14 (GAGMAG) contributes to the FAD binding site.

This sequence belongs to the MnmG family. TrmFO subfamily. FAD is required as a cofactor.

It localises to the cytoplasm. It catalyses the reaction uridine(54) in tRNA + (6R)-5,10-methylene-5,6,7,8-tetrahydrofolate + NADH + H(+) = 5-methyluridine(54) in tRNA + (6S)-5,6,7,8-tetrahydrofolate + NAD(+). The enzyme catalyses uridine(54) in tRNA + (6R)-5,10-methylene-5,6,7,8-tetrahydrofolate + NADPH + H(+) = 5-methyluridine(54) in tRNA + (6S)-5,6,7,8-tetrahydrofolate + NADP(+). Its function is as follows. Catalyzes the folate-dependent formation of 5-methyl-uridine at position 54 (M-5-U54) in all tRNAs. This chain is Methylenetetrahydrofolate--tRNA-(uracil-5-)-methyltransferase TrmFO, found in Cereibacter sphaeroides (strain ATCC 17023 / DSM 158 / JCM 6121 / CCUG 31486 / LMG 2827 / NBRC 12203 / NCIMB 8253 / ATH 2.4.1.) (Rhodobacter sphaeroides).